Consider the following 208-residue polypeptide: Small ribosomal subunit protein uS4 (208 aa).

Residues 98 to 161 form the S4 RNA-binding domain; it reads QRLDNVVYRM…KNNPQIVRAI (64 aa).

It belongs to the universal ribosomal protein uS4 family. As to quaternary structure, part of the 30S ribosomal subunit. Contacts protein S5. The interaction surface between S4 and S5 is involved in control of translational fidelity.

One of the primary rRNA binding proteins, it binds directly to 16S rRNA where it nucleates assembly of the body of the 30S subunit. In terms of biological role, with S5 and S12 plays an important role in translational accuracy. The polypeptide is Small ribosomal subunit protein uS4 (Campylobacter concisus (strain 13826)).